The following is a 62-amino-acid chain: U10-buthitoxin-Hj1a (62 aa).

The N-terminal stretch at 1-22 is a signal peptide; sequence MQKIFIILVLFCILKFNVDVEG. 3 cysteine pairs are disulfide-bonded: Cys28–Cys46, Cys33–Cys59, and Cys37–Cys61.

It belongs to the short scorpion toxin superfamily. Potassium channel inhibitor family. Alpha-KTx 23 subfamily. Expressed by the venom gland.

The protein resides in the secreted. May block potassium channels. This chain is U10-buthitoxin-Hj1a, found in Hottentotta judaicus (Black scorpion).